The sequence spans 473 residues: Aspartyl/glutamyl-tRNA(Asn/Gln) amidotransferase subunit B (473 aa).

Belongs to the GatB/GatE family. GatB subfamily. Heterotrimer of A, B and C subunits.

It carries out the reaction L-glutamyl-tRNA(Gln) + L-glutamine + ATP + H2O = L-glutaminyl-tRNA(Gln) + L-glutamate + ADP + phosphate + H(+). The enzyme catalyses L-aspartyl-tRNA(Asn) + L-glutamine + ATP + H2O = L-asparaginyl-tRNA(Asn) + L-glutamate + ADP + phosphate + 2 H(+). Its function is as follows. Allows the formation of correctly charged Asn-tRNA(Asn) or Gln-tRNA(Gln) through the transamidation of misacylated Asp-tRNA(Asn) or Glu-tRNA(Gln) in organisms which lack either or both of asparaginyl-tRNA or glutaminyl-tRNA synthetases. The reaction takes place in the presence of glutamine and ATP through an activated phospho-Asp-tRNA(Asn) or phospho-Glu-tRNA(Gln). The polypeptide is Aspartyl/glutamyl-tRNA(Asn/Gln) amidotransferase subunit B (Mycoplasmopsis synoviae (strain 53) (Mycoplasma synoviae)).